The primary structure comprises 477 residues: Ribulose bisphosphate carboxylase large chain (477 aa).

Positions 1 to 2 (MS) are excised as a propeptide. Position 3 is an N-acetylproline (proline 3). Position 14 is an N6,N6,N6-trimethyllysine (lysine 14). The substrate site is built by asparagine 123 and threonine 173. The active-site Proton acceptor is lysine 175. Residue lysine 177 coordinates substrate. Mg(2+)-binding residues include lysine 201, aspartate 203, and glutamate 204. An N6-carboxylysine modification is found at lysine 201. Catalysis depends on histidine 294, which acts as the Proton acceptor. Substrate-binding residues include arginine 295, histidine 327, and serine 379.

This sequence belongs to the RuBisCO large chain family. Type I subfamily. In terms of assembly, heterohexadecamer of 8 large chains and 8 small chains; disulfide-linked. The disulfide link is formed within the large subunit homodimers. Requires Mg(2+) as cofactor. In terms of processing, the disulfide bond which can form in the large chain dimeric partners within the hexadecamer appears to be associated with oxidative stress and protein turnover.

The protein resides in the plastid. It localises to the chloroplast. The enzyme catalyses 2 (2R)-3-phosphoglycerate + 2 H(+) = D-ribulose 1,5-bisphosphate + CO2 + H2O. The catalysed reaction is D-ribulose 1,5-bisphosphate + O2 = 2-phosphoglycolate + (2R)-3-phosphoglycerate + 2 H(+). In terms of biological role, ruBisCO catalyzes two reactions: the carboxylation of D-ribulose 1,5-bisphosphate, the primary event in carbon dioxide fixation, as well as the oxidative fragmentation of the pentose substrate in the photorespiration process. Both reactions occur simultaneously and in competition at the same active site. In Manihot esculenta (Cassava), this protein is Ribulose bisphosphate carboxylase large chain.